We begin with the raw amino-acid sequence, 610 residues long: UvrABC system protein C (610 aa).

One can recognise a GIY-YIG domain in the interval 13-92; that stretch reads TLPGVYLMKN…IKQHKPRYNA (80 aa). Positions 204–239 constitute a UVR domain; the sequence is KDVLKDLYEEMRLLSEQLEFEKANHLLRTIRYIEKT.

It belongs to the UvrC family. Interacts with UvrB in an incision complex.

The protein resides in the cytoplasm. The UvrABC repair system catalyzes the recognition and processing of DNA lesions. UvrC both incises the 5' and 3' sides of the lesion. The N-terminal half is responsible for the 3' incision and the C-terminal half is responsible for the 5' incision. The protein is UvrABC system protein C of Protochlamydia amoebophila (strain UWE25).